Here is a 252-residue protein sequence, read N- to C-terminus: Neurovirulence factor ICP34.5 (252 aa).

The span at 1 to 15 (MARRRRRHRGPRRPR) shows a compositional bias: basic residues. Positions 1–17 (MARRRRRHRGPRRPRPP) are required for nucleolar localization. Disordered stretches follow at residues 1-129 (MARR…PFRL) and 150-179 (RRAG…PATP). Polar residues predominate over residues 25 to 36 (TAQSQVTSTPNS). Positions 46–59 (AAPPPPPAGGPPPS) are enriched in pro residues. The segment covering 74 to 84 (ASDDDDDDDWP) has biased composition (acidic residues). 2 stretches are compositionally biased toward pro residues: residues 85–94 (DSPPPEPAPE) and 120–129 (SHPPSRPFRL). The Nuclear export signal signature appears at 129–138 (LPPRLALRLR). Tandem repeats lie at residues 162–164 (ATP), 165–167 (ATP), 168–170 (ATP), 171–173 (ATP), 174–176 (ATP), and 177–179 (ATP). Residues 162–179 (ATPATPATPATPATPATP) form a 6 X 3 AA tandem repeats of A-T-P region. Residues 165 to 179 (ATPATPATPATPATP) show a composition bias toward low complexity. Residues 179 to 192 (PARVRFSPHVRVRH) are binding to PP1CA. The tract at residues 179–192 (PARVRFSPHVRVRH) is interaction with host PPP1CA. The interval 194 to 252 (VVWASAARLARRGSWARERADRARFRRRVAEAEAVIGPCLGPKARARALARGAGPANSV) is important for interferon resistance. Residues 204–222 (RRGSWARERADRARFRRRV) carry the Bipartite nuclear localization signal motif. The tract at residues 222-237 (VAEAEAVIGPCLGPKA) is interaction with host EIF2S1/EIF-2ALPHA.

It belongs to the PPP1R15 family. Interacts with host PPP1CA to form a high-molecular-weight complex that dephosphorylates EIF2S1/eIF-2alpha. Interacts with host EIF2S1/eIF-2alpha; this interaction is crucial for the specific dephosphorylation of EIF2S1/eIF-2alpha by PPP1CA. Binds to proliferating cell nuclear antigen (PCNA), which may release host cells from growth arrest and facilitate viral replication. Interacts (via N-terminus) with host C1QBP and PRKCA. Interacts with protein UL31. Interacts with host TBK1. Interacts with host STING/TMEM173; this interaction inhibits the intracellular DNA sensing pathway. Interacts with host BECN1; this interaction modulates host autophagy.

It localises to the host cytoplasm. It is found in the host nucleus. The protein localises to the host nucleolus. The protein resides in the virion. Its function is as follows. Inhibits the establishment of the immune response and of the integrated stress response (ISR) in the infected cell. Plays essential roles in viral nuclear egress to mediate capsid transit across the nuclear membrane. Facilitates nuclear egress cooperatively with host C1QBP and protein kinase C/PKC to induce lamin A/C phosphorylation and subsequent reorganization. In turn, lamina disassembles and nuclear egress occurs. Recruits the serine/threonine protein phosphatase PPP1CA/PP1-alpha to dephosphorylate the translation initiation factor EIF2S1/eIF-2alpha, thereby couteracting the host shutoff of protein synthesis involving double-stranded RNA-dependent protein kinase EIF2AK2/PKR. In turn, controls host IRF3 activation and subsequently inhibits host interferon response. Controls the DNA sensing pathway by interacting with and inhibiting host STING/TMEM173. Also down-modulates the host MHC class II proteins cell surface expression. Acts as a neurovirulence factor that has a profound effect on the growth of the virus in central nervous system tissue, by interacting with host BECN1 and thereby antagonizing the host autophagy response. The protein is Neurovirulence factor ICP34.5 (RL1) of Human herpesvirus 1 (strain CVG-2) (HHV-1).